The primary structure comprises 208 residues: MLNSRSELLDQFLRQQGIRNEAILAAIRELPRERFIPEALSHQAYQNNALPIGEGQTISQPYIVAKMTELLELTPTSNVLEVGTGSGYQTAVLAKLVEHVNSIERIKSLQWNAKRLLKQLDIYNVSTKHGDGWKGWESKGPFDAIIVTAAAESIPNDLLFQLKDNGHLVIPVGEESQQLLRIIRQGEEFFSEVIEEVRFVPLVAGELA.

The active site involves serine 59.

This sequence belongs to the methyltransferase superfamily. L-isoaspartyl/D-aspartyl protein methyltransferase family.

The protein resides in the cytoplasm. It catalyses the reaction [protein]-L-isoaspartate + S-adenosyl-L-methionine = [protein]-L-isoaspartate alpha-methyl ester + S-adenosyl-L-homocysteine. Catalyzes the methyl esterification of L-isoaspartyl residues in peptides and proteins that result from spontaneous decomposition of normal L-aspartyl and L-asparaginyl residues. It plays a role in the repair and/or degradation of damaged proteins. In Aliivibrio fischeri (strain MJ11) (Vibrio fischeri), this protein is Protein-L-isoaspartate O-methyltransferase.